Here is a 76-residue protein sequence, read N- to C-terminus: UPF0352 protein ECA2748 (76 aa).

It belongs to the UPF0352 family.

The polypeptide is UPF0352 protein ECA2748 (Pectobacterium atrosepticum (strain SCRI 1043 / ATCC BAA-672) (Erwinia carotovora subsp. atroseptica)).